Here is a 425-residue protein sequence, read N- to C-terminus: Serine--tRNA ligase (425 aa).

231 to 233 lines the L-serine pocket; sequence TAE. ATP is bound by residues 262-264 and Val-278; that span reads RTE. Glu-285 is an L-serine binding site. Residue 349–352 participates in ATP binding; that stretch reads EVTS. Position 384 (Thr-384) interacts with L-serine.

Belongs to the class-II aminoacyl-tRNA synthetase family. Type-1 seryl-tRNA synthetase subfamily. In terms of assembly, homodimer. The tRNA molecule binds across the dimer.

The protein resides in the cytoplasm. The catalysed reaction is tRNA(Ser) + L-serine + ATP = L-seryl-tRNA(Ser) + AMP + diphosphate + H(+). The enzyme catalyses tRNA(Sec) + L-serine + ATP = L-seryl-tRNA(Sec) + AMP + diphosphate + H(+). It functions in the pathway aminoacyl-tRNA biosynthesis; selenocysteinyl-tRNA(Sec) biosynthesis; L-seryl-tRNA(Sec) from L-serine and tRNA(Sec): step 1/1. Catalyzes the attachment of serine to tRNA(Ser). Is also able to aminoacylate tRNA(Sec) with serine, to form the misacylated tRNA L-seryl-tRNA(Sec), which will be further converted into selenocysteinyl-tRNA(Sec). The sequence is that of Serine--tRNA ligase from Dictyoglomus thermophilum (strain ATCC 35947 / DSM 3960 / H-6-12).